The sequence spans 400 residues: Enolase (400 aa).

Position 154 (Gln154) interacts with (2R)-2-phosphoglycerate. Catalysis depends on Glu197, which acts as the Proton donor. Mg(2+) contacts are provided by Asp233, Glu274, and Asp301. The (2R)-2-phosphoglycerate site is built by Lys326, Arg355, Ser356, and Lys377. Lys326 acts as the Proton acceptor in catalysis.

It belongs to the enolase family. Mg(2+) is required as a cofactor.

It localises to the cytoplasm. It is found in the secreted. The protein localises to the cell surface. The catalysed reaction is (2R)-2-phosphoglycerate = phosphoenolpyruvate + H2O. It participates in carbohydrate degradation; glycolysis; pyruvate from D-glyceraldehyde 3-phosphate: step 4/5. Functionally, catalyzes the reversible conversion of 2-phosphoglycerate (2-PG) into phosphoenolpyruvate (PEP). It is essential for the degradation of carbohydrates via glycolysis. This Picrophilus torridus (strain ATCC 700027 / DSM 9790 / JCM 10055 / NBRC 100828 / KAW 2/3) protein is Enolase.